The primary structure comprises 550 residues: 2-succinyl-5-enolpyruvyl-6-hydroxy-3-cyclohexene-1-carboxylate synthase (550 aa).

This sequence belongs to the TPP enzyme family. MenD subfamily. In terms of assembly, homodimer. It depends on Mg(2+) as a cofactor. Mn(2+) is required as a cofactor. The cofactor is thiamine diphosphate.

It carries out the reaction isochorismate + 2-oxoglutarate + H(+) = 5-enolpyruvoyl-6-hydroxy-2-succinyl-cyclohex-3-ene-1-carboxylate + CO2. Its pathway is quinol/quinone metabolism; 1,4-dihydroxy-2-naphthoate biosynthesis; 1,4-dihydroxy-2-naphthoate from chorismate: step 2/7. It functions in the pathway quinol/quinone metabolism; menaquinone biosynthesis. In terms of biological role, catalyzes the thiamine diphosphate-dependent decarboxylation of 2-oxoglutarate and the subsequent addition of the resulting succinic semialdehyde-thiamine pyrophosphate anion to isochorismate to yield 2-succinyl-5-enolpyruvyl-6-hydroxy-3-cyclohexene-1-carboxylate (SEPHCHC). The protein is 2-succinyl-5-enolpyruvyl-6-hydroxy-3-cyclohexene-1-carboxylate synthase of Flavobacterium psychrophilum (strain ATCC 49511 / DSM 21280 / CIP 103535 / JIP02/86).